The primary structure comprises 412 residues: NADH-quinone oxidoreductase subunit 4 (412 aa).

This sequence belongs to the complex I 49 kDa subunit family. NDH-1 is composed of at least 14 different subunits, Nqo1 to Nqo14. The complex has a L-shaped structure, with the hydrophobic arm (subunits Nqo7, Nqo8, Nqo10 to Nqo14) embedded in the inner membrane and the hydrophilic peripheral arm (subunits Nqo1 to Nqo6, Nqo9) protruding into the bacterial cytoplasm. The hydrophilic domain contains all the redox centers.

The protein resides in the cell inner membrane. The catalysed reaction is a quinone + NADH + 5 H(+)(in) = a quinol + NAD(+) + 4 H(+)(out). Functionally, NDH-1 shuttles electrons from NADH, via FMN and iron-sulfur (Fe-S) centers, to quinones in the respiratory chain. The immediate electron acceptor for the enzyme in this species is believed to be ubiquinone. Couples the redox reaction to proton translocation (for every two electrons transferred, four hydrogen ions are translocated across the cytoplasmic membrane), and thus conserves the redox energy in a proton gradient. The sequence is that of NADH-quinone oxidoreductase subunit 4 (nqo4) from Paracoccus denitrificans.